The sequence spans 594 residues: Glutamate decarboxylase 1 (594 aa).

Over residues 1–13 (MASSTPSSSATSS) the composition is skewed to low complexity. The tract at residues 1 to 25 (MASSTPSSSATSSNAGPDPNTTNLR) is disordered. Phosphoserine is present on Ser-78. 190–192 (QLS) lines the 4-aminobutanoate pocket. Lys-405 is modified (N6-(pyridoxal phosphate)lysine). A 4-aminobutanoate-binding site is contributed by Arg-567.

The protein belongs to the group II decarboxylase family. As to quaternary structure, homodimer. Pyridoxal 5'-phosphate serves as cofactor.

It carries out the reaction L-glutamate + H(+) = 4-aminobutanoate + CO2. Its function is as follows. Catalyzes the synthesis of the inhibitory neurotransmitter gamma-aminobutyric acid (GABA) with pyridoxal 5'-phosphate as cofactor. The sequence is that of Glutamate decarboxylase 1 (GAD1) from Sus scrofa (Pig).